The sequence spans 292 residues: Protein sarah (292 aa).

Residues 1 to 51 (MSDAAKSNNNASADAPDPTTPDATGEADAANAATPTTPRGNHNNNNSANGR) are compositionally biased toward low complexity. Residues 1 to 111 (MSDAAKSNNN…TEPEVDADSF (111 aa)) are disordered. Phosphoserine is present on residues Ser-67, Ser-72, and Ser-100. Acidic residues predominate over residues 98–111 (VDSDTEPEVDADSF). Thr-102 and Thr-196 each carry phosphothreonine. Phosphoserine occurs at positions 215 and 219. Thr-246 is modified (phosphothreonine).

The protein belongs to the RCAN family. As to quaternary structure, interacts with Pp2B-14D, CanA-14F and CanB2. Phosphorylation at Ser-215 and Ser-219 is essential for calcineurin activation and completion of female meiosis. Sgg is required for phosphorylation of Ser-215 in activated eggs. Ser-100, Thr-102 and Ser-219 are highly phosphorylated in both ovaries and activated eggs; however, phosphorylation at Ser-100 or Thr-102 is not required for sra function in completion of female meiosis. In terms of tissue distribution, expressed in central nervous system of the third instar larvae, with a relatively intense signal in the brain and weak signals in the ventral ganglion. Relatively low, but ubiquitous expression level is observed in leg and wing imaginal disks, no signal is detected in the eye-antennal disks. Expressed in all neurons in the adult brain.

Functionally, required for elongation of meiosis I spindle. Critical for ovulation, meiotic progression in oocytes and female courtship behavior, including their postmating changes. Regulates female meiosis by controlling calcineurin activity in the germline. Has a role in calcium signaling during egg activation; bcd mRNA polyadenylation and translation in the oocyte. This chain is Protein sarah (sra), found in Drosophila melanogaster (Fruit fly).